A 249-amino-acid polypeptide reads, in one-letter code: DNA repair protein RecO (249 aa).

It belongs to the RecO family.

Functionally, involved in DNA repair and RecF pathway recombination. This Desulforudis audaxviator (strain MP104C) protein is DNA repair protein RecO.